Here is a 318-residue protein sequence, read N- to C-terminus: Transaldolase (318 aa).

K126 serves as the catalytic Schiff-base intermediate with substrate.

Belongs to the transaldolase family. Type 1 subfamily. Homodimer.

The protein localises to the cytoplasm. The enzyme catalyses D-sedoheptulose 7-phosphate + D-glyceraldehyde 3-phosphate = D-erythrose 4-phosphate + beta-D-fructose 6-phosphate. It participates in carbohydrate degradation; pentose phosphate pathway; D-glyceraldehyde 3-phosphate and beta-D-fructose 6-phosphate from D-ribose 5-phosphate and D-xylulose 5-phosphate (non-oxidative stage): step 2/3. Transaldolase is important for the balance of metabolites in the pentose-phosphate pathway. The chain is Transaldolase from Cupriavidus metallidurans (strain ATCC 43123 / DSM 2839 / NBRC 102507 / CH34) (Ralstonia metallidurans).